The sequence spans 363 residues: Probable endopolygalacturonase B (363 aa).

An N-terminal signal peptide occupies residues 1-20 (MQLLQSSVIAATVGAALVAA). Residues 21–28 (VPVELEAR) constitute a propeptide that is removed on maturation. Cys-31 and Cys-46 are oxidised to a cystine. PbH1 repeat units follow at residues 158–187 (SDNL…DVGS), 188–209 (STYI…AINS), 210–230 (GSHI…SIGS), 239–260 (VEDV…RIKT), 268–290 (VSNV…IVEQ), and 302–347 (TNGI…SITG). An N-linked (GlcNAc...) asparagine glycan is attached at Asn-162. The active-site Proton donor is Asp-202. The cysteines at positions 204 and 220 are disulfide-linked. The active site involves His-224. 2 disulfides stabilise this stretch: Cys-330-Cys-335 and Cys-354-Cys-363.

This sequence belongs to the glycosyl hydrolase 28 family.

The protein resides in the secreted. It catalyses the reaction (1,4-alpha-D-galacturonosyl)n+m + H2O = (1,4-alpha-D-galacturonosyl)n + (1,4-alpha-D-galacturonosyl)m.. Involved in maceration and soft-rotting of plant tissue. Hydrolyzes the 1,4-alpha glycosidic bonds of de-esterified pectate in the smooth region of the plant cell wall. This chain is Probable endopolygalacturonase B (pgaB), found in Aspergillus flavus (strain ATCC 200026 / FGSC A1120 / IAM 13836 / NRRL 3357 / JCM 12722 / SRRC 167).